A 208-amino-acid polypeptide reads, in one-letter code: Thymidylate kinase (208 aa).

10 to 17 (GPEGSGKT) is a binding site for ATP.

This sequence belongs to the thymidylate kinase family.

It carries out the reaction dTMP + ATP = dTDP + ADP. Its function is as follows. Phosphorylation of dTMP to form dTDP in both de novo and salvage pathways of dTTP synthesis. This is Thymidylate kinase from Bacillus cereus (strain ATCC 10987 / NRS 248).